We begin with the raw amino-acid sequence, 142 residues long: ATP synthase epsilon chain (142 aa).

Belongs to the ATPase epsilon chain family. As to quaternary structure, F-type ATPases have 2 components, CF(1) - the catalytic core - and CF(0) - the membrane proton channel. CF(1) has five subunits: alpha(3), beta(3), gamma(1), delta(1), epsilon(1). CF(0) has three main subunits: a, b and c.

Its subcellular location is the cell inner membrane. In terms of biological role, produces ATP from ADP in the presence of a proton gradient across the membrane. This Maridesulfovibrio salexigens (strain ATCC 14822 / DSM 2638 / NCIMB 8403 / VKM B-1763) (Desulfovibrio salexigens) protein is ATP synthase epsilon chain.